Reading from the N-terminus, the 473-residue chain is Photosystem II CP43 reaction center protein (473 aa).

Positions 1–14 (MKTLYSLRRYFHVE) are excised as a propeptide. Thr15 carries the N-acetylthreonine modification. Position 15 is a phosphothreonine (Thr15). 5 helical membrane-spanning segments follow: residues 69–93 (LFEV…PHLA), 134–155 (LIGP…KDKN), 178–200 (KAMY…RVIS), 255–275 (KPFA…LSYS), and 291–312 (WFNN…ASQA). Glu367 serves as a coordination point for [CaMn4O5] cluster. The chain crosses the membrane as a helical span at residues 447 to 471 (RARAAAAGFEKGIDRDTEPVLSMRP).

It belongs to the PsbB/PsbC family. PsbC subfamily. PSII is composed of 1 copy each of membrane proteins PsbA, PsbB, PsbC, PsbD, PsbE, PsbF, PsbH, PsbI, PsbJ, PsbK, PsbL, PsbM, PsbT, PsbX, PsbY, PsbZ, Psb30/Ycf12, at least 3 peripheral proteins of the oxygen-evolving complex and a large number of cofactors. It forms dimeric complexes. The cofactor is Binds multiple chlorophylls and provides some of the ligands for the Ca-4Mn-5O cluster of the oxygen-evolving complex. It may also provide a ligand for a Cl- that is required for oxygen evolution. PSII binds additional chlorophylls, carotenoids and specific lipids..

The protein localises to the plastid. It localises to the chloroplast thylakoid membrane. Functionally, one of the components of the core complex of photosystem II (PSII). It binds chlorophyll and helps catalyze the primary light-induced photochemical processes of PSII. PSII is a light-driven water:plastoquinone oxidoreductase, using light energy to abstract electrons from H(2)O, generating O(2) and a proton gradient subsequently used for ATP formation. The sequence is that of Photosystem II CP43 reaction center protein from Ostreococcus tauri.